The sequence spans 272 residues: MYTLKRFGQHWLNDGAVLDRIVAAAGLACGDRVLEIGPGLGSLTARLLRQVPVVAVEIDRRAVAQLQRQFGGDKRFVLVEGDILREALPEPANVVVANIPYNISGPILAKLTGSLAQPIRRFRTIVLLVQKELGQRIAAPPGSRTYGALSVRLQYLAECELLFEVPSHCFTPPPKVDSAVIRLTPRPFALQADDPAHLDALVTRAFATRRKMLKNCLKGWVETEKLLAAFASLDISPDARAEDLSVERFVQLSNRLAESDYPSGAARGDRRA.

The S-adenosyl-L-methionine site is built by His10, Leu12, Gly37, Glu57, Asp82, and Asn98.

Belongs to the class I-like SAM-binding methyltransferase superfamily. rRNA adenine N(6)-methyltransferase family. RsmA subfamily.

It is found in the cytoplasm. The catalysed reaction is adenosine(1518)/adenosine(1519) in 16S rRNA + 4 S-adenosyl-L-methionine = N(6)-dimethyladenosine(1518)/N(6)-dimethyladenosine(1519) in 16S rRNA + 4 S-adenosyl-L-homocysteine + 4 H(+). In terms of biological role, specifically dimethylates two adjacent adenosines (A1518 and A1519) in the loop of a conserved hairpin near the 3'-end of 16S rRNA in the 30S particle. May play a critical role in biogenesis of 30S subunits. This Gloeobacter violaceus (strain ATCC 29082 / PCC 7421) protein is Ribosomal RNA small subunit methyltransferase A.